Consider the following 253-residue polypeptide: Zinc import ATP-binding protein ZnuC (253 aa).

Positions 6–227 (VTLNKISVTF…FGNRGAEQLA (222 aa)) constitute an ABC transporter domain. 38-45 (GPNGAGKS) lines the ATP pocket.

This sequence belongs to the ABC transporter superfamily. Zinc importer (TC 3.A.1.15.5) family. As to quaternary structure, the complex is composed of two ATP-binding proteins (ZnuC), two transmembrane proteins (ZnuB) and a solute-binding protein (ZnuA).

Its subcellular location is the cell inner membrane. The enzyme catalyses Zn(2+)(out) + ATP(in) + H2O(in) = Zn(2+)(in) + ADP(in) + phosphate(in) + H(+)(in). Functionally, part of the ABC transporter complex ZnuABC involved in zinc import. Responsible for energy coupling to the transport system. This chain is Zinc import ATP-binding protein ZnuC, found in Yersinia pseudotuberculosis serotype I (strain IP32953).